Reading from the N-terminus, the 455-residue chain is Probable cytosolic iron-sulfur protein assembly protein 1 (455 aa).

7 WD repeats span residues 31 to 70 (GHSS…TTSA), 90 to 129 (GHQR…DGSS), 163 to 202 (GHES…EFEC), 208 to 247 (EHSQ…DWFC), 253 to 292 (GHES…QCEA), 318 to 365 (YHDR…DEKS), and 380 to 453 (HASA…YAAT).

The protein belongs to the WD repeat CIA1 family.

Functionally, essential component of the cytosolic iron-sulfur (Fe/S) protein assembly machinery. Required for the maturation of extramitochondrial Fe/S proteins. This chain is Probable cytosolic iron-sulfur protein assembly protein 1, found in Mycosarcoma maydis (Corn smut fungus).